A 338-amino-acid chain; its full sequence is Structural protein VP9 (338 aa).

It localises to the virion. Its function is as follows. Plays an important role in virus transmission by the insect vector. May participate in the virus stability by binding clamp proteins and surrounding the pentameric turrets present in the virion. This Rice ragged stunt virus (isolate Thailand) (RRSV) protein is Structural protein VP9.